We begin with the raw amino-acid sequence, 210 residues long: Claudin-4 (210 aa).

Topologically, residues 1–7 (MASMGLQ) are cytoplasmic. Positions 1–103 (MASMGLQVLG…GMLLSVVGGK (103 aa)) are interaction with EPHA2. Residues 8–28 (VLGISLAVLGWLGIILSCALP) traverse the membrane as a helical segment. Residues 29 to 81 (MWRVTAFIGSNIVTAQTSWEGLWMNCVVQSTGQMQCKMYDSMLALPQDLQAAR) lie on the Extracellular side of the membrane. A disulfide bridge links cysteine 54 with cysteine 64. A helical transmembrane segment spans residues 82-102 (ALMVISIIVGALGMLLSVVGG). Residues 103 to 116 (KCTNCMEDETVKAK) are Cytoplasmic-facing. Residues 117-137 (IMITAGAVFIVASMLIMVPVS) traverse the membrane as a helical segment. Residues 138 to 160 (WTAHNVIRDFYNPMVASGQKREM) lie on the Extracellular side of the membrane. A helical membrane pass occupies residues 161–181 (GASLYVGWAASGLLLLGGGLL). The Cytoplasmic portion of the chain corresponds to 182 to 210 (CCSCPPRSNDKPYSAKYSAARSVPASNYV). Tyrosine 209 is subject to Phosphotyrosine; by EPHA2. Residues 209 to 210 (YV) are interactions with TJP1, TJP2 and TJP3.

It belongs to the claudin family. As to quaternary structure, can form heteropolymeric strands with other claudins. Interacts with CLDN8. Interacts with CLDN1. Directly interacts with TJP1/ZO-1, TJP2/ZO-2 and TJP3/ZO-3. Interacts with EPHA2; phosphorylates CLDN4 and may regulate tight junctions. Post-translationally, phosphorylated. Phosphorylation by EPHA2 is stimulated by EFNA1 and alters interaction with TJP1. In terms of tissue distribution, expressed primarily in lung and kidney. Present in both cortical and medullar collecting ducts (at protein level).

It is found in the cell junction. Its subcellular location is the tight junction. The protein localises to the cell membrane. The catalysed reaction is chloride(in) = chloride(out). It carries out the reaction bromide(in) = bromide(out). It catalyses the reaction iodide(out) = iodide(in). The enzyme catalyses fluoride(in) = fluoride(out). In terms of biological role, can associate with other claudins to regulate tight junction structural and functional strand dynamics. May coassemble with CLDN8 into tight junction strands containing anion-selective channels that convey paracellular chloride permeability in renal collecting ducts. May integrate into CLDN3 strands to modulate localized tight junction barrier properties. May disrupt strand assembly of channel-forming CLDN2 and CLDN15 and inhibit cation conductance. Cannot form tight junction strands on its own. The protein is Claudin-4 of Mus musculus (Mouse).